The chain runs to 81 residues: ATP synthase subunit c, chloroplastic (81 aa).

The next 2 helical transmembrane spans lie at 3–23 (PIIS…ASIG) and 57–77 (LAFM…LLFA).

Belongs to the ATPase C chain family. As to quaternary structure, F-type ATPases have 2 components, F(1) - the catalytic core - and F(0) - the membrane proton channel. F(1) has five subunits: alpha(3), beta(3), gamma(1), delta(1), epsilon(1). F(0) has four main subunits: a(1), b(1), b'(1) and c(10-14). The alpha and beta chains form an alternating ring which encloses part of the gamma chain. F(1) is attached to F(0) by a central stalk formed by the gamma and epsilon chains, while a peripheral stalk is formed by the delta, b and b' chains.

The protein localises to the plastid. Its subcellular location is the chloroplast thylakoid membrane. Its function is as follows. F(1)F(0) ATP synthase produces ATP from ADP in the presence of a proton or sodium gradient. F-type ATPases consist of two structural domains, F(1) containing the extramembraneous catalytic core and F(0) containing the membrane proton channel, linked together by a central stalk and a peripheral stalk. During catalysis, ATP synthesis in the catalytic domain of F(1) is coupled via a rotary mechanism of the central stalk subunits to proton translocation. Functionally, key component of the F(0) channel; it plays a direct role in translocation across the membrane. A homomeric c-ring of between 10-14 subunits forms the central stalk rotor element with the F(1) delta and epsilon subunits. This is ATP synthase subunit c, chloroplastic from Welwitschia mirabilis (Tree tumbo).